Here is a 1794-residue protein sequence, read N- to C-terminus: MATPRGQTVWFGNEFPNDDLKDLFRRLHQHSKDRRFRLLSVFLDESTAILKEEVANLPQQLQELVPHFDTACTLPEVDFRQGPLGAAMESALLTILELGMLIGNYEAEDIEWDLDPSQTILAGLSIGIIAGAAVALSSSLADVAKVGAESVRVSFRLGVYVADISTKLEAPQSDGTLQSWAHVVTGMSHEAVQEELSQFNAVTQNPEITKVFVSAADKTSVSVTGPPSRIKAAFQHSPSLRYSKSLPLPVYDGLCHAPHLYSQDDIEIVINSAKSVIPTSRPVRLPLISSQTGKPFEAKTAGELFLEIGTELLTGTIYLDNVTAGILEHVKLKEPTGNYQIISFRMSQVLNGIQAAIETDFPALGRARRDLVSWVHGDYGARRPSSYAASKLAIVGMACRLPGGANDPELFWELLEQGRDTLTTVPPDRFDLNTHYDPTGKTENATQTPFGNFIDRPGYFDAGFFNMSPREAEQTDPMHRLALVTAYEAMEMAGLVPGRTPSTRPNRIGTFYGQASDDWRELNASQNISTYAVPGGERAFANGRINYFFKFSGPSYNIDTACSSGLAAVQAACSALWAGEADTVIAGGLNIITDPDNYAGLGNGHFLSKTGQCKVWDKDADGYCRADGIGSVVIKRLEDAEADNDNILAVVLGARTNHSAEAVSITHPHAGAQKANYRQVLHQAGVNPLDVSYVELHGTGTQAGDAVESESVSDVFAPSMPRRRPDQRLYLGAVKSNIGHGEAAAGIASLLKALLVYQKNMIPKHIGIKTEINPIIPKDLDRRHVGLAMSNTPWPRPAGKKRLAVVNSFGAHGGNTTVLLEDAPERVKVSTQDDRTTHPVVISAKSKKSLQANIEKLLSWLDQNPDADLADLSYTLCARRMHHSMRFGAAASDIAALQKTLRSWLDSPKASTELRAIPNDAPSVVLTFTGQGAYYSGMGRELFAEFSYFRTQVLQLDQIAQRLGFPSVVPVIDGSIDDGPASPILTQLSVVVLEIALARFWSHLGIRISAVVGHSLGEYAAFAVAGVISAADALYLVGRRAQLTEERCTQGSHSMLSVRASEDDIEELIAGSPDTAEIAYEVCCRNTPQDTVIGGTKESIDRIRQALEANSIKCTQLDVPFAFHTAQMDPILDSLETLATPIAFKAPSIPVLSPLLGSVVFDRKSIHAQYLRRATREAVDFVAAIEAAQDFGLVDAKTIWIDVGPHPICAGLVRGIDSSASVISSCRRNEDNLATMSKSLVTLHLAGLTPCWAEYFRPREREYSLLKLPTYSWNETDYWIPYIGTWTLDKALLKYGEKKAPLSLAMSRPSALRTSLVHQITAETVEATTATLHVLSDMQHPDFLEALHGHRMNNCGVATSSIWSDMAFTVGEYLYRRLVPQVKDVHMNLSDFEVLHAQVALEKKGSVQPLVLKAHLDLSTSSMSLTWFNASAETGECAAESFATGVVRFEDPAAWTREWDRLSHLVLGRIEALEQRAAEGKASKLSKPLAYALFKNVVDYADRYRGMDQVVLHEHEAVAEVTLVAERHGTWHTPPHWIDSVSHLAGLVMNGSDASNTRDYFYVTPGCSSFRLLNPLKAGGKYRSYVRMFPLLEEANMYAGDVYILQGEQIVGMVGQIRFRRVPRLLMDRFFSPAAASHAEKQLQETAPSATSVKKSTPPAAEAPASVPALLSNPVAIPFPAASKSEVSTPPLTPPSQQESPGESAVITPATSDRGDPVDAGVVGQCLQVMARETGLEVDALTPDASFVQLGIDSLMSLVLSEKFRAELGIEIKSSLFLECPTIGEMTAWLEEYC.

The N-terminal acylcarrier protein transacylase domain (SAT) stretch occupies residues 19-256 (DLKDLFRRLH…PLPVYDGLCH (238 aa)). The Ketosynthase family 3 (KS3) domain occupies 389 to 822 (ASKLAIVGMA…GGNTTVLLED (434 aa)). The tract at residues 427 to 448 (PDRFDLNTHYDPTGKTENATQT) is disordered. Positions 428–440 (DRFDLNTHYDPTG) are enriched in basic and acidic residues. Active-site for beta-ketoacyl synthase activity residues include C562, H697, and H740. The interval 928–1249 (FTGQGAYYSG…LVTLHLAGLT (322 aa)) is malonyl-CoA:ACP transacylase (MAT) domain. The tract at residues 1314-1633 (TSLVHQITAE…RLLMDRFFSP (320 aa)) is product template (PT) domain. The segment at 1318–1454 (HQITAETVEA…GVVRFEDPAA (137 aa)) is N-terminal hotdog fold. The region spanning 1318-1628 (HQITAETVEA…FRRVPRLLMD (311 aa)) is the PKS/mFAS DH domain. H1350 serves as the catalytic Proton acceptor; for dehydratase activity. A C-terminal hotdog fold region spans residues 1482 to 1628 (ASKLSKPLAY…FRRVPRLLMD (147 aa)). Catalysis depends on D1539, which acts as the Proton donor; for dehydratase activity. Disordered stretches follow at residues 1637–1665 (SHAE…EAPA) and 1682–1718 (ASKS…GDPV). Composition is skewed to polar residues over residues 1644–1655 (QETAPSATSVKK) and 1685–1701 (SEVS…QESP). The Carrier domain occupies 1717-1794 (PVDAGVVGQC…EMTAWLEEYC (78 aa)). S1754 carries the O-(pantetheine 4'-phosphoryl)serine modification.

Pantetheine 4'-phosphate serves as cofactor.

The protein operates within secondary metabolite biosynthesis. Its function is as follows. Non-reducing polyketide synthase; part of the gene cluster that mediates the biosynthesis of neosartoricin, a prenylated anthracenone that exhibits T-cell antiproliferative activity, suggestive of a physiological role as an immunosuppressive agent. The non-reducing polyketide synthase nscA probably synthesizes and cyclizes the decaketide backbone. The hydrolase nscB then mediates the product release through hydrolysis followed by spontaneous decarboxylation. The prenyltransferase nscD catalyzes the addition of the dimethylallyl group to the aromatic C5. The FAD-dependent monooxygenase nscC is then responsible for the stereospecific hydroxylation at C2. There is no gene encoding O-acetyltransferase in the nsc gene cluster; thus, the last step of 2-O-acetylation leading to neosartoricin may be catalyzed by an unidentified O-acetyltransferase. The sequence is that of Non-reducing polyketide synthase nscA from Neosartorya fischeri (strain ATCC 1020 / DSM 3700 / CBS 544.65 / FGSC A1164 / JCM 1740 / NRRL 181 / WB 181) (Aspergillus fischerianus).